Consider the following 132-residue polypeptide: UPF0299 membrane protein YohJ (132 aa).

4 helical membrane passes run 7-27 (IIWQ…AGIF), 31-51 (LLPV…VLLA), 63-83 (GCYV…VGVM), and 93-113 (FGPV…VVSW).

The protein belongs to the UPF0299 family.

Its subcellular location is the cell inner membrane. The sequence is that of UPF0299 membrane protein YohJ from Shigella boydii serotype 18 (strain CDC 3083-94 / BS512).